Here is a 423-residue protein sequence, read N- to C-terminus: Phosphoribosylamine--glycine ligase (423 aa).

Positions 107–312 (KDLCARYDIP…LLPILYATAT (206 aa)) constitute an ATP-grasp domain. Residue 133–193 (VRAQGAPIVI…EAFLDGEEAS (61 aa)) coordinates ATP. Mg(2+)-binding residues include glutamate 282 and asparagine 284.

The protein belongs to the GARS family. Mg(2+) is required as a cofactor. Mn(2+) serves as cofactor.

It carries out the reaction 5-phospho-beta-D-ribosylamine + glycine + ATP = N(1)-(5-phospho-beta-D-ribosyl)glycinamide + ADP + phosphate + H(+). It participates in purine metabolism; IMP biosynthesis via de novo pathway; N(1)-(5-phospho-D-ribosyl)glycinamide from 5-phospho-alpha-D-ribose 1-diphosphate: step 2/2. This is Phosphoribosylamine--glycine ligase from Agrobacterium fabrum (strain C58 / ATCC 33970) (Agrobacterium tumefaciens (strain C58)).